Reading from the N-terminus, the 396-residue chain is S-adenosylmethionine synthase (396 aa).

ATP is bound at residue His16. Asp18 provides a ligand contact to Mg(2+). Position 44 (Glu44) interacts with K(+). Positions 57 and 100 each coordinate L-methionine. A flexible loop region spans residues 100-110 (QSQDIARGVDN). ATP is bound by residues 162 to 164 (DGK), 228 to 229 (RF), Asp237, 243 to 244 (RK), Ala260, and Lys264. Asp237 lines the L-methionine pocket. Lys268 lines the L-methionine pocket.

It belongs to the AdoMet synthase family. As to quaternary structure, homotetramer; dimer of dimers. Requires Mg(2+) as cofactor. The cofactor is K(+).

The protein resides in the cytoplasm. It catalyses the reaction L-methionine + ATP + H2O = S-adenosyl-L-methionine + phosphate + diphosphate. Its pathway is amino-acid biosynthesis; S-adenosyl-L-methionine biosynthesis; S-adenosyl-L-methionine from L-methionine: step 1/1. In terms of biological role, catalyzes the formation of S-adenosylmethionine (AdoMet) from methionine and ATP. The overall synthetic reaction is composed of two sequential steps, AdoMet formation and the subsequent tripolyphosphate hydrolysis which occurs prior to release of AdoMet from the enzyme. This chain is S-adenosylmethionine synthase, found in Myxococcus xanthus (strain DK1622).